The sequence spans 174 residues: Large ribosomal subunit protein uL10 (174 aa).

Belongs to the universal ribosomal protein uL10 family. As to quaternary structure, part of the ribosomal stalk of the 50S ribosomal subunit. The N-terminus interacts with L11 and the large rRNA to form the base of the stalk. The C-terminus forms an elongated spine to which L12 dimers bind in a sequential fashion forming a multimeric L10(L12)X complex.

Its function is as follows. Forms part of the ribosomal stalk, playing a central role in the interaction of the ribosome with GTP-bound translation factors. The protein is Large ribosomal subunit protein uL10 of Bordetella petrii (strain ATCC BAA-461 / DSM 12804 / CCUG 43448).